Here is a 283-residue protein sequence, read N- to C-terminus: Serine protease 57 (283 aa).

Residues 1-31 (MGLGLRGWGRPLLTVATALMLPVKPPAGSWG) form the signal peptide. Residues 34–263 (IIGGHEVTPH…FVAWIWDVVR (230 aa)) form the Peptidase S1 domain. The cysteines at positions 59 and 75 are disulfide-linked. Active-site charge relay system residues include His-74 and Asp-122. 2 N-linked (GlcNAc...) asparagine glycosylation sites follow: Asn-129 and Asn-189. 3 disulfides stabilise this stretch: Cys-157/Cys-224, Cys-188/Cys-202, and Cys-214/Cys-239. Ser-218 acts as the Charge relay system in catalysis.

This sequence belongs to the peptidase S1 family. In terms of processing, after cleavage of the signal peptide, the N-terminus is probably further processed by CTSC. Processing by CTSC is probably required for accumulation in cytoplasmic granules; in the absence of CTSC the protein does not accumulate. Post-translationally, N-glycosylated. Detected in peripheral blood neutrophil granulocytes, but not in other types of leukocytes. Detected in neutrophils and neutrophil precursors in bone marrow (at protein level). Detected in myeloblasts and promyelocytes in bone marrow.

The protein localises to the cytoplasmic granule lumen. The protein resides in the secreted. With respect to regulation, inhibited by SERPINA1, SERPINC1 and SERPING1. Its function is as follows. Serine protease that cleaves preferentially after Arg residues. Can also cleave after citrulline (deimidated arginine) and methylarginine residues. The sequence is that of Serine protease 57 (PRSS57) from Homo sapiens (Human).